The following is a 95-amino-acid chain: Co-chaperonin GroES (95 aa).

It belongs to the GroES chaperonin family. Heptamer of 7 subunits arranged in a ring. Interacts with the chaperonin GroEL.

Its subcellular location is the cytoplasm. Functionally, together with the chaperonin GroEL, plays an essential role in assisting protein folding. The GroEL-GroES system forms a nano-cage that allows encapsulation of the non-native substrate proteins and provides a physical environment optimized to promote and accelerate protein folding. GroES binds to the apical surface of the GroEL ring, thereby capping the opening of the GroEL channel. This Syntrophotalea carbinolica (strain DSM 2380 / NBRC 103641 / GraBd1) (Pelobacter carbinolicus) protein is Co-chaperonin GroES.